A 143-amino-acid polypeptide reads, in one-letter code: Nucleoside diphosphate kinase (143 aa).

ATP-binding residues include Lys-11, Phe-59, Arg-87, Thr-93, Arg-104, and Asn-114. Catalysis depends on His-117, which acts as the Pros-phosphohistidine intermediate.

It belongs to the NDK family. As to quaternary structure, homotetramer. Mg(2+) is required as a cofactor.

The protein localises to the cytoplasm. It carries out the reaction a 2'-deoxyribonucleoside 5'-diphosphate + ATP = a 2'-deoxyribonucleoside 5'-triphosphate + ADP. The catalysed reaction is a ribonucleoside 5'-diphosphate + ATP = a ribonucleoside 5'-triphosphate + ADP. Major role in the synthesis of nucleoside triphosphates other than ATP. The ATP gamma phosphate is transferred to the NDP beta phosphate via a ping-pong mechanism, using a phosphorylated active-site intermediate. This chain is Nucleoside diphosphate kinase, found in Colwellia psychrerythraea (strain 34H / ATCC BAA-681) (Vibrio psychroerythus).